We begin with the raw amino-acid sequence, 681 residues long: Glutamine--fructose-6-phosphate aminotransferase [isomerizing] 1 (681 aa).

The For GATase activity role is filled by C2. Residues 2–287 (CGIFAYLNYH…DDDVAAVVDG (286 aa)) form the Glutamine amidotransferase type-2 domain. Phosphoserine is present on residues S103 and S243. Residues 295-662 (KRTARDHPGR…LQLLAFHLAV (368 aa)) are isomerase. SIS domains are found at residues 359–498 (HIKE…DRIS) and 530–671 (LATE…VDFP). Substrate-binding positions include 376–377 (TS), 421–423 (SQS), T426, and H577.

Homotetramer, may also exist as homodimers.

The enzyme catalyses D-fructose 6-phosphate + L-glutamine = D-glucosamine 6-phosphate + L-glutamate. The protein operates within nucleotide-sugar biosynthesis; UDP-N-acetyl-alpha-D-glucosamine biosynthesis; alpha-D-glucosamine 6-phosphate from D-fructose 6-phosphate: step 1/1. Its activity is regulated as follows. Inhibited by 4,4'-dithiodipyridine. Functionally, controls the flux of glucose into the hexosamine pathway. Most likely involved in regulating the availability of precursors for N- and O-linked glycosylation of proteins. Regulates the circadian expression of clock genes BMAL1 and CRY1. Has a role in fine tuning the metabolic fluctuations of cytosolic UDP-GlcNAc and its effects on hyaluronan synthesis that occur during tissue remodeling. The sequence is that of Glutamine--fructose-6-phosphate aminotransferase [isomerizing] 1 (Gfpt1) from Rattus norvegicus (Rat).